The chain runs to 211 residues: Uridine kinase (211 aa).

ATP is bound at residue 15-22; sequence GGSGSGKT.

This sequence belongs to the uridine kinase family.

Its subcellular location is the cytoplasm. The enzyme catalyses uridine + ATP = UMP + ADP + H(+). It catalyses the reaction cytidine + ATP = CMP + ADP + H(+). The protein operates within pyrimidine metabolism; CTP biosynthesis via salvage pathway; CTP from cytidine: step 1/3. Its pathway is pyrimidine metabolism; UMP biosynthesis via salvage pathway; UMP from uridine: step 1/1. The protein is Uridine kinase of Lactobacillus helveticus (strain DPC 4571).